Here is a 394-residue protein sequence, read N- to C-terminus: 4-hydroxyphenylpyruvate dioxygenase (394 aa).

VOC domains follow at residues 18–149 (SFHH…LLEY) and 181–339 (FIDH…IFTK). The Fe cation site is built by His184, His267, and Glu350.

It belongs to the 4HPPD family. In terms of assembly, homodimer. Fe cation serves as cofactor.

The protein resides in the cytoplasm. It localises to the endoplasmic reticulum membrane. Its subcellular location is the golgi apparatus membrane. It catalyses the reaction 3-(4-hydroxyphenyl)pyruvate + O2 = homogentisate + CO2. The protein operates within amino-acid degradation; L-phenylalanine degradation; acetoacetate and fumarate from L-phenylalanine: step 3/6. Functionally, catalyzes the conversion of 4-hydroxyphenylpyruvic acid to homogentisic acid, one of the steps in tyrosine catabolism. The protein is 4-hydroxyphenylpyruvate dioxygenase (hpd) of Xenopus tropicalis (Western clawed frog).